Here is a 552-residue protein sequence, read N- to C-terminus: Phosphoglucomutase (552 aa).

Residue Ser135 is the Phosphoserine intermediate of the active site. Mg(2+)-binding residues include Ser135, Asp289, Asp291, and Asp293.

This sequence belongs to the phosphohexose mutase family. Mg(2+) is required as a cofactor.

The catalysed reaction is alpha-D-glucose 1-phosphate = alpha-D-glucose 6-phosphate. It functions in the pathway glycolipid metabolism; diglucosyl-diacylglycerol biosynthesis. In terms of biological role, catalyzes the interconversion between glucose-6-phosphate and alpha-glucose-1-phosphate. This is the first step in the biosynthesis of diglucosyl-diacylglycerol (Glc2-DAG), i.e. a glycolipid found in the membrane, which is also used as a membrane anchor for lipoteichoic acid (LTA). This chain is Phosphoglucomutase (pgcA), found in Staphylococcus saprophyticus subsp. saprophyticus (strain ATCC 15305 / DSM 20229 / NCIMB 8711 / NCTC 7292 / S-41).